We begin with the raw amino-acid sequence, 94 residues long: MRIKPLGNRVVIKRLEAEEKTKSGIVLTGSAKEVPQEAEVVAVGPGSIVDGTKIEMEVKVGDKVLYSKYSGTEVKLDGEEYMILKQDDILAIVE.

Belongs to the GroES chaperonin family. As to quaternary structure, heptamer of 7 subunits arranged in a ring. Interacts with the chaperonin GroEL.

It localises to the cytoplasm. Its function is as follows. Together with the chaperonin GroEL, plays an essential role in assisting protein folding. The GroEL-GroES system forms a nano-cage that allows encapsulation of the non-native substrate proteins and provides a physical environment optimized to promote and accelerate protein folding. GroES binds to the apical surface of the GroEL ring, thereby capping the opening of the GroEL channel. This chain is Co-chaperonin GroES, found in Clostridium botulinum (strain Alaska E43 / Type E3).